The sequence spans 334 residues: Holliday junction branch migration complex subunit RuvB (334 aa).

Positions 1–182 (MNERMVDQSM…FGVHLRLEYY (182 aa)) are large ATPase domain (RuvB-L). ATP-binding positions include leucine 21, arginine 22, glycine 63, lysine 66, threonine 67, threonine 68, 129–131 (EDF), arginine 172, tyrosine 182, and arginine 219. Threonine 67 provides a ligand contact to Mg(2+). Residues 183–253 (NESDLKEIII…TTKHALGLLQ (71 aa)) form a small ATPAse domain (RuvB-S) region. The head domain (RuvB-H) stretch occupies residues 256 to 334 (QHGLDYIDHK…HFAKSNEERG (79 aa)). DNA is bound by residues arginine 292, arginine 311, and arginine 316.

The protein belongs to the RuvB family. As to quaternary structure, homohexamer. Forms an RuvA(8)-RuvB(12)-Holliday junction (HJ) complex. HJ DNA is sandwiched between 2 RuvA tetramers; dsDNA enters through RuvA and exits via RuvB. An RuvB hexamer assembles on each DNA strand where it exits the tetramer. Each RuvB hexamer is contacted by two RuvA subunits (via domain III) on 2 adjacent RuvB subunits; this complex drives branch migration. In the full resolvosome a probable DNA-RuvA(4)-RuvB(12)-RuvC(2) complex forms which resolves the HJ.

Its subcellular location is the cytoplasm. It carries out the reaction ATP + H2O = ADP + phosphate + H(+). In terms of biological role, the RuvA-RuvB-RuvC complex processes Holliday junction (HJ) DNA during genetic recombination and DNA repair, while the RuvA-RuvB complex plays an important role in the rescue of blocked DNA replication forks via replication fork reversal (RFR). RuvA specifically binds to HJ cruciform DNA, conferring on it an open structure. The RuvB hexamer acts as an ATP-dependent pump, pulling dsDNA into and through the RuvAB complex. RuvB forms 2 homohexamers on either side of HJ DNA bound by 1 or 2 RuvA tetramers; 4 subunits per hexamer contact DNA at a time. Coordinated motions by a converter formed by DNA-disengaged RuvB subunits stimulates ATP hydrolysis and nucleotide exchange. Immobilization of the converter enables RuvB to convert the ATP-contained energy into a lever motion, pulling 2 nucleotides of DNA out of the RuvA tetramer per ATP hydrolyzed, thus driving DNA branch migration. The RuvB motors rotate together with the DNA substrate, which together with the progressing nucleotide cycle form the mechanistic basis for DNA recombination by continuous HJ branch migration. Branch migration allows RuvC to scan DNA until it finds its consensus sequence, where it cleaves and resolves cruciform DNA. The polypeptide is Holliday junction branch migration complex subunit RuvB (Staphylococcus aureus (strain N315)).